Here is a 135-residue protein sequence, read N- to C-terminus: Galectin-1 (135 aa).

Ala-2 carries the N-acetylalanine modification. The Galectin domain maps to 4–135 (GLVASNLNLK…DFKIKCVAFE (132 aa)). Lys-13, Lys-19, and Lys-29 each carry N6-acetyllysine. Residue Ser-30 is modified to Phosphoserine. A beta-D-galactoside-binding positions include 45 to 49 (HFNPR), His-53, Asn-62, and 69 to 72 (WGTE). Lys-108 is subject to N6-acetyllysine; alternate. Lys-108 bears the N6-succinyllysine; alternate mark. Lys-128 carries the post-translational modification N6-acetyllysine.

Homodimer. Binds LGALS3BP. Interacts with CD2, CD3, CD4, CD6, CD7, CD43, ALCAM and CD45. Interacts with laminin (via poly-N-acetyllactosamine). Interacts with SUSD2. Interacts with cargo receptor TMED10; the interaction mediates the translocation from the cytoplasm into the ERGIC (endoplasmic reticulum-Golgi intermediate compartment) and thereby secretion. Interacts with CD69.

It is found in the secreted. The protein localises to the extracellular space. Its subcellular location is the extracellular matrix. It localises to the cytoplasm. Its function is as follows. Lectin that binds beta-galactoside and a wide array of complex carbohydrates. Plays a role in regulating apoptosis, cell proliferation and cell differentiation. Inhibits CD45 protein phosphatase activity and therefore the dephosphorylation of Lyn kinase. Strong inducer of T-cell apoptosis. Plays a negative role in Th17 cell differentiation via activation of the receptor CD69. In Mus musculus (Mouse), this protein is Galectin-1 (Lgals1).